A 167-amino-acid polypeptide reads, in one-letter code: uncharacterized protein (167 aa).

To B.subtilis XkdI.

This is an uncharacterized protein from Bacillus subtilis (strain 168).